Here is a 371-residue protein sequence, read N- to C-terminus: Histidinol-phosphate aminotransferase (371 aa).

Lys-228 is subject to N6-(pyridoxal phosphate)lysine.

The protein belongs to the class-II pyridoxal-phosphate-dependent aminotransferase family. Histidinol-phosphate aminotransferase subfamily. Pyridoxal 5'-phosphate is required as a cofactor.

It carries out the reaction L-histidinol phosphate + 2-oxoglutarate = 3-(imidazol-4-yl)-2-oxopropyl phosphate + L-glutamate. It functions in the pathway amino-acid biosynthesis; L-histidine biosynthesis; L-histidine from 5-phospho-alpha-D-ribose 1-diphosphate: step 7/9. In Methanococcus maripaludis (strain C6 / ATCC BAA-1332), this protein is Histidinol-phosphate aminotransferase.